A 127-amino-acid chain; its full sequence is RxLR effector protein CRE6 (127 aa).

Residues 1–19 form the signal peptide; the sequence is MIRNALLVLVFVLIGTISA. A RxLR-dEER motif is present at residues 48–67; that stretch reads RLLRQGSVKEGGVHDATEER.

The protein belongs to the RxLR effector family.

The protein resides in the secreted. The protein localises to the host cell. Functionally, effector that is involved in host plant infection. Contributes to virulence during the early infection stage, by inhibiting plant defense responses induced by both PAMP-triggered immunity (PTI) and effector-triggered immunity (ETI). This chain is RxLR effector protein CRE6, found in Phytophthora infestans (strain T30-4) (Potato late blight agent).